We begin with the raw amino-acid sequence, 290 residues long: Pyridoxal 5'-phosphate synthase subunit PdxS (290 aa).

D-ribose 5-phosphate is bound at residue D22. K79 (schiff-base intermediate with D-ribose 5-phosphate) is an active-site residue. G151 serves as a coordination point for D-ribose 5-phosphate. R163 is a D-glyceraldehyde 3-phosphate binding site. D-ribose 5-phosphate contacts are provided by residues G212 and G233–S234.

It belongs to the PdxS/SNZ family. As to quaternary structure, in the presence of PdxT, forms a dodecamer of heterodimers.

The enzyme catalyses aldehydo-D-ribose 5-phosphate + D-glyceraldehyde 3-phosphate + L-glutamine = pyridoxal 5'-phosphate + L-glutamate + phosphate + 3 H2O + H(+). It functions in the pathway cofactor biosynthesis; pyridoxal 5'-phosphate biosynthesis. Its function is as follows. Catalyzes the formation of pyridoxal 5'-phosphate from ribose 5-phosphate (RBP), glyceraldehyde 3-phosphate (G3P) and ammonia. The ammonia is provided by the PdxT subunit. Can also use ribulose 5-phosphate and dihydroxyacetone phosphate as substrates, resulting from enzyme-catalyzed isomerization of RBP and G3P, respectively. This is Pyridoxal 5'-phosphate synthase subunit PdxS from Clostridium botulinum (strain Loch Maree / Type A3).